The sequence spans 304 residues: Bifunctional protein FolD (304 aa).

Residues 170–172 (GRS), Ser-195, and Ile-236 contribute to the NADP(+) site.

This sequence belongs to the tetrahydrofolate dehydrogenase/cyclohydrolase family. Homodimer.

The enzyme catalyses (6R)-5,10-methylene-5,6,7,8-tetrahydrofolate + NADP(+) = (6R)-5,10-methenyltetrahydrofolate + NADPH. The catalysed reaction is (6R)-5,10-methenyltetrahydrofolate + H2O = (6R)-10-formyltetrahydrofolate + H(+). Its pathway is one-carbon metabolism; tetrahydrofolate interconversion. Its function is as follows. Catalyzes the oxidation of 5,10-methylenetetrahydrofolate to 5,10-methenyltetrahydrofolate and then the hydrolysis of 5,10-methenyltetrahydrofolate to 10-formyltetrahydrofolate. In Anaplasma phagocytophilum (strain HZ), this protein is Bifunctional protein FolD.